The chain runs to 106 residues: Large ribosomal subunit protein eL42Q (106 aa).

The protein belongs to the eukaryotic ribosomal protein eL42 family.

The protein is Large ribosomal subunit protein eL42Q (RIM-C) of Candida maltosa (Yeast).